Reading from the N-terminus, the 238-residue chain is Probable rhamnogalacturonate lyase B (238 aa).

The signal sequence occupies residues Met1 to Ala19. N-linked (GlcNAc...) asparagine glycans are attached at residues Asn27, Asn110, and Asn143.

This sequence belongs to the polysaccharide lyase 4 family.

It localises to the secreted. It catalyses the reaction Endotype eliminative cleavage of L-alpha-rhamnopyranosyl-(1-&gt;4)-alpha-D-galactopyranosyluronic acid bonds of rhamnogalacturonan I domains in ramified hairy regions of pectin leaving L-rhamnopyranose at the reducing end and 4-deoxy-4,5-unsaturated D-galactopyranosyluronic acid at the non-reducing end.. In terms of biological role, pectinolytic enzymes consist of four classes of enzymes: pectin lyase, polygalacturonase, pectin methylesterase and rhamnogalacturonase. Degrades the rhamnogalacturonan I (RG-I) backbone of pectin. The polypeptide is Probable rhamnogalacturonate lyase B (rglB) (Aspergillus oryzae (strain ATCC 42149 / RIB 40) (Yellow koji mold)).